Consider the following 330-residue polypeptide: MANSLRTLFSVSTHGVFLNKRSSYRVRKVFVGMPLRICSEIPRFVSVSCIRSDMCGIMMLGKDVHDLLETSSGGNVEKGFLRWRNGGGMYHRSALIDSSALVEFGAVVHQEAILGAEVHIGSNTVIGSSVKIGPSTKIGNCSIGDLCVIHNGVCIGQDGFGFYVDDNGNMVKKPQTLNVKIGNRVEIGANTCIDRGSWRDTVIGDDTKIDNLVQIGHNVIIGKCCLFCGQVGIAGSAEIGDFVALGGRVAVRDHVSIVSKVRLAANSCVTKNITEPGDYGGFPAYKKTEPDSAFASDKHCFILQKILIQVPIHQWRRQIVEAQISSKRKP.

Residues 1–52 (MANSLRTLFSVSTHGVFLNKRSSYRVRKVFVGMPLRICSEIPRFVSVSCIRS) constitute a mitochondrion transit peptide. 160-162 (FGF) is a UDP-N-acetyl-alpha-D-glucosamine binding site. Positions 210 and 214 each coordinate hexadecanoate. His-217 functions as the Proton acceptor in the catalytic mechanism. Positions 218, 236, and 254 each coordinate UDP-N-acetyl-alpha-D-glucosamine.

Belongs to the transferase hexapeptide repeat family. LpxD subfamily. Homotrimer.

The protein resides in the mitochondrion. The enzyme catalyses a UDP-3-O-[(3R)-3-hydroxyacyl]-alpha-D-glucosamine + a (3R)-hydroxyacyl-[ACP] = a UDP-2-N,3-O-bis[(3R)-3-hydroxyacyl]-alpha-D-glucosamine + holo-[ACP] + H(+). It functions in the pathway glycolipid biosynthesis; lipid IV(A) biosynthesis; lipid IV(A) from (3R)-3-hydroxytetradecanoyl-[acyl-carrier-protein] and UDP-N-acetyl-alpha-D-glucosamine: step 3/6. In terms of biological role, involved in the biosynthesis of lipid A, a phosphorylated glycolipid that in bacteria anchors the lipopolysaccharide to the outer membrane of the cell. Lipid A-like molecules in plants may serve as structural components of the outer membranes of mitochondria and/or chloroplasts, or may be involved in signal transduction or plant defense responses. The protein is Probable UDP-3-O-acylglucosamine N-acyltransferase 1, mitochondrial (LPXD1) of Arabidopsis thaliana (Mouse-ear cress).